The chain runs to 371 residues: Cell division control protein 3 (371 aa).

One can recognise a Septin-type G domain in the interval 22–307 (AGIDFNIMTV…DEYKTREIGL (286 aa)). The interval 32–39 (GSNGLGKS) is G1 motif. Residues 32 to 39 (GSNGLGKS), G116, 195 to 203 (KSDLLSDSE), and R257 contribute to the GTP site. The G3 motif stretch occupies residues 113–116 (EVDG). A G4 motif region spans residues 194-197 (GKSD).

It belongs to the TRAFAC class TrmE-Era-EngA-EngB-Septin-like GTPase superfamily. Septin GTPase family. Component of the septin complex.

In terms of biological role, septins are GTPases involved in cytokinesis. The septins localize to the site of cleavage and act as a structural scaffold that recruits different components involved in diverse processes at specific stages during the cell cycle. Septins are also involved in cell morphogenesis, chitin deposition, cell cycle regulation, cell compartmentalization and spore wall formation. This chain is Cell division control protein 3 (CDC3), found in Encephalitozoon cuniculi (strain GB-M1) (Microsporidian parasite).